Here is a 193-residue protein sequence, read N- to C-terminus: Interferon lambda-3 (193 aa).

The N-terminal stretch at 1–19 is a signal peptide; it reads MLLLLLPLLLAAVLTRTQA. Intrachain disulfides connect Cys35-Cys132, Cys69-Cys166, and Cys185-Cys192.

This sequence belongs to the lambda interferon family.

It localises to the secreted. Its function is as follows. Cytokine with antiviral, antitumour and immunomodulatory activities. Plays a critical role in the antiviral host defense, predominantly in the epithelial tissues. Acts as a ligand for the heterodimeric class II cytokine receptor composed of IL10RB and IFNLR1, and receptor engagement leads to the activation of the JAK/STAT signaling pathway resulting in the expression of IFN-stimulated genes (ISG), which mediate the antiviral state. Has a restricted receptor distribution and therefore restricted targets: is primarily active in epithelial cells and this cell type-selective action is because of the epithelial cell-specific expression of its receptor IFNLR1. Seems not to be essential for early virus-activated host defense in vaginal infection, but plays an important role in Toll-like receptor (TLR)-induced antiviral defense. Plays a significant role in the antiviral immune defense in the intestinal epithelium. Exerts an immunomodulatory effect by up-regulating MHC class I antigen expression. This chain is Interferon lambda-3 (Ifnl3), found in Mus musculus (Mouse).